The primary structure comprises 273 residues: Tryptophan synthase alpha chain (273 aa).

Residues E49 and D60 each act as proton acceptor in the active site.

This sequence belongs to the TrpA family. As to quaternary structure, tetramer of two alpha and two beta chains.

It catalyses the reaction (1S,2R)-1-C-(indol-3-yl)glycerol 3-phosphate + L-serine = D-glyceraldehyde 3-phosphate + L-tryptophan + H2O. It functions in the pathway amino-acid biosynthesis; L-tryptophan biosynthesis; L-tryptophan from chorismate: step 5/5. The alpha subunit is responsible for the aldol cleavage of indoleglycerol phosphate to indole and glyceraldehyde 3-phosphate. The polypeptide is Tryptophan synthase alpha chain (Albidiferax ferrireducens (strain ATCC BAA-621 / DSM 15236 / T118) (Rhodoferax ferrireducens)).